Here is a 157-residue protein sequence, read N- to C-terminus: Peptide methionine sulfoxide reductase MsrA (157 aa).

Cysteine 13 is an active-site residue.

Belongs to the MsrA Met sulfoxide reductase family.

The catalysed reaction is L-methionyl-[protein] + [thioredoxin]-disulfide + H2O = L-methionyl-(S)-S-oxide-[protein] + [thioredoxin]-dithiol. It carries out the reaction [thioredoxin]-disulfide + L-methionine + H2O = L-methionine (S)-S-oxide + [thioredoxin]-dithiol. Its function is as follows. Has an important function as a repair enzyme for proteins that have been inactivated by oxidation. Catalyzes the reversible oxidation-reduction of methionine sulfoxide in proteins to methionine. This Methanococcus maripaludis (strain C6 / ATCC BAA-1332) protein is Peptide methionine sulfoxide reductase MsrA.